Here is a 410-residue protein sequence, read N- to C-terminus: Beta-arrestin-2 (410 aa).

Residue tyrosine 48 is modified to Phosphotyrosine. Hydroxyproline; by PHD2 occurs at positions 176 and 181. Positions 241 to 410 are interaction with TRAF6; it reads ADICLFSTAQ…KDDDCDDQFC (170 aa). A Phosphoserine modification is found at serine 361. Positions 364–410 are interaction with AP2B1; sequence RETDVPVDTNLIEFDTNYATDDDIVFEDFARLRLKGMKDDDCDDQFC. The residue at position 383 (threonine 383) is a Phosphothreonine. The short motif at 386–396 is the [DE]-X(1,2)-F-X-X-[FL]-X-X-X-R motif element; that stretch reads DIVFEDFARLR.

The protein belongs to the arrestin family. In terms of assembly, homooligomer; the self-association is mediated by InsP6-binding. Heterooligomer with ARRB1; the association is mediated by InsP6-binding. Interacts with ADRB2 and CHRM2. Interacts with PDE4A. Interacts with PDE4D. Interacts with MAPK10, MAPK1 and MAPK3. Interacts with DRD2. Interacts with FSHR. Interacts with CLTC. Interacts with HTR2C. Interacts with CCR5. Interacts with CXCR4. Interacts with SRC. Interacts with DUSP16; the interaction is interrupted by stimulation of AGTR1 and activation of MAPK10. Interacts with CHUK; the interaction is enhanced stimulation of ADRB2. Interacts with RELA. Interacts with MDM2; the interaction is enhanced by activation of GPCRs. Interacts with SLC9A5. Interacts with TRAF6. Interacts with IGF1R. Interacts with ENG. Interacts with ARRB2. Interacts with KIR2DL1, KIR2DL3 and KIR2DL4. Interacts with LDLR. Interacts with AP2B1. Interacts with C5AR1. Interacts with RAF1. Interacts with MAP2K1. Interacts with MAPK1. Interacts with MAPK10; the interaction enhances MAPK10 activation by MAP3K5. Interacts with MAP2K4; the interaction is enhanced by presence of MAP3K5 and MAPK10. Interacts with MAP3K5. Interacts with AKT1. Interacts with IKBKB and MAP3K14. Interacts with SMO (activated). Interacts with GSK3A and GSK3B. Interacts with CXCR4; the interaction is dependent on C-terminal phosphorylation of CXCR4 and allows activation of MAPK1 and MAPK3. Interacts with GPR143. Interacts with HCK and CXCR1 (phosphorylated). Associates with protein phosphatase 2A (PP2A). Interacts with ACKR3 and ACKR4. Interacts with ARRDC1; the interaction is direct. Interacts with GPR61, GPR62 and GPR135. Interacts (via NACHT and LRR domains) with NLRP3; this interaction is direct and inducible by omega-3 polyunsaturated fatty acids (PUFAs). Interacts with FFAR4 (via C-terminus); this interaction is stimulated by long-chain fatty acids (LCFAs). Interacts with GPR35. Interacts with GPR84. Interacts with TIGIT; this interaction inhibits the NF-kappa-B pathway. Interacts with TGFBR3. In terms of processing, phosphorylated at Thr-383 in the cytoplasm; probably dephosphorylated at the plasma membrane. The phosphorylation does not regulate internalization and recycling of ADRB2, interaction with clathrin or AP2B1. The ubiquitination status appears to regulate the formation and trafficking of beta-arrestin-GPCR complexes and signaling. Ubiquitination appears to occur GPCR-specific. Ubiquitinated by MDM2; the ubiquitination is required for rapid internalization of ADRB2. Deubiquitinated by USP33; the deubiquitination leads to a dissociation of the beta-arrestin-GPCR complex. Stimulation of a class A GPCR, such as ADRB2, induces transient ubiquitination and subsequently promotes association with USP33. Stimulation of a class B GPCR promotes a sustained ubiquitination. Deubiquitinated by USP20; allowing USP20 to deubiquitinate TRAF6 leading to inhibition of NF-kappa-B signaling. Post-translationally, hydroxylation by PHD2 modulates the rate of internalization by slowing down recruitment to the plasma membrane and inhibiting subsequent co-internalization with class A receptors. As to expression, predominantly localized in neuronal tissues and in the spleen.

It localises to the cytoplasm. Its subcellular location is the nucleus. It is found in the cell membrane. The protein resides in the membrane. The protein localises to the clathrin-coated pit. It localises to the cytoplasmic vesicle. Functions in regulating agonist-mediated G-protein coupled receptor (GPCR) signaling by mediating both receptor desensitization and resensitization processes. During homologous desensitization, beta-arrestins bind to the GPRK-phosphorylated receptor and sterically preclude its coupling to the cognate G-protein; the binding appears to require additional receptor determinants exposed only in the active receptor conformation. The beta-arrestins target many receptors for internalization by acting as endocytic adapters (CLASPs, clathrin-associated sorting proteins) and recruiting the GPRCs to the adapter protein 2 complex 2 (AP-2) in clathrin-coated pits (CCPs). However, the extent of beta-arrestin involvement appears to vary significantly depending on the receptor, agonist and cell type. Internalized arrestin-receptor complexes traffic to intracellular endosomes, where they remain uncoupled from G-proteins. Two different modes of arrestin-mediated internalization occur. Class A receptors, like ADRB2, OPRM1, ENDRA, D1AR and ADRA1B dissociate from beta-arrestin at or near the plasma membrane and undergo rapid recycling. Class B receptors, like AVPR2, AGTR1, NTSR1, TRHR and TACR1 internalize as a complex with arrestin and traffic with it to endosomal vesicles, presumably as desensitized receptors, for extended periods of time. Receptor resensitization then requires that receptor-bound arrestin is removed so that the receptor can be dephosphorylated and returned to the plasma membrane. Mediates endocytosis of CCR7 following ligation of CCL19 but not CCL21. Involved in internalization of P2RY1, P2RY4, P2RY6 and P2RY11 and ATP-stimulated internalization of P2RY2. Involved in phosphorylation-dependent internalization of OPRD1 and subsequent recycling or degradation. Involved in ubiquitination of IGF1R. Beta-arrestins function as multivalent adapter proteins that can switch the GPCR from a G-protein signaling mode that transmits short-lived signals from the plasma membrane via small molecule second messengers and ion channels to a beta-arrestin signaling mode that transmits a distinct set of signals that are initiated as the receptor internalizes and transits the intracellular compartment. Acts as a signaling scaffold for MAPK pathways such as MAPK1/3 (ERK1/2) and MAPK10 (JNK3). ERK1/2 and JNK3 activated by the beta-arrestin scaffold are largely excluded from the nucleus and confined to cytoplasmic locations such as endocytic vesicles, also called beta-arrestin signalosomes. Acts as a signaling scaffold for the AKT1 pathway. GPCRs for which the beta-arrestin-mediated signaling relies on both ARRB1 and ARRB2 (codependent regulation) include ADRB2, F2RL1 and PTH1R. For some GPCRs the beta-arrestin-mediated signaling relies on either ARRB1 or ARRB2 and is inhibited by the other respective beta-arrestin form (reciprocal regulation). Increases ERK1/2 signaling in AGTR1- and AVPR2-mediated activation (reciprocal regulation). Involved in CCR7-mediated ERK1/2 signaling involving ligand CCL19. Is involved in type-1A angiotensin II receptor/AGTR1-mediated ERK activity. Is involved in type-1A angiotensin II receptor/AGTR1-mediated MAPK10 activity. Is involved in dopamine-stimulated AKT1 activity in the striatum by disrupting the association of AKT1 with its negative regulator PP2A. Involved in AGTR1-mediated chemotaxis. Appears to function as signaling scaffold involved in regulation of MIP-1-beta-stimulated CCR5-dependent chemotaxis. Involved in attenuation of NF-kappa-B-dependent transcription in response to GPCR or cytokine stimulation by interacting with and stabilizing CHUK. Suppresses UV-induced NF-kappa-B-dependent activation by interacting with CHUK. The function is promoted by stimulation of ADRB2 and dephosphorylation of ARRB2. Involved in IL8-mediated granule release in neutrophils. Involved in p53/TP53-mediated apoptosis by regulating MDM2 and reducing the MDM2-mediated degradation of p53/TP53. May serve as nuclear messenger for GPCRs. Upon stimulation of OR1D2, may be involved in regulation of gene expression during the early processes of fertilization. Also involved in regulation of receptors other than GPCRs. Involved in endocytosis of TGFBR2 and TGFBR3 and down-regulates TGF-beta signaling such as NF-kappa-B activation. Involved in endocytosis of low-density lipoprotein receptor/LDLR. Involved in endocytosis of smoothened homolog/Smo, which also requires GRK2. Involved in endocytosis of SLC9A5. Involved in endocytosis of ENG and subsequent TGF-beta-mediated ERK activation and migration of epithelial cells. Involved in Toll-like receptor and IL-1 receptor signaling through the interaction with TRAF6 which prevents TRAF6 autoubiquitination and oligomerization required for activation of NF-kappa-B and JUN. Involved in insulin resistance by acting as insulin-induced signaling scaffold for SRC, AKT1 and INSR. Involved in regulation of inhibitory signaling of natural killer cells by recruiting PTPN6 and PTPN11 to KIR2DL1. Involved in the internalization of the atypical chemokine receptor ACKR3. Acts as an adapter protein coupling FFAR4 receptor to specific downstream signaling pathways, as well as mediating receptor endocytosis. During the activation step of NLRP3 inflammasome, directly associates with NLRP3 leading to inhibition of pro-inflammatory cytokine release and inhibition of inflammation. The sequence is that of Beta-arrestin-2 (Arrb2) from Mus musculus (Mouse).